A 272-amino-acid polypeptide reads, in one-letter code: HMP-PP phosphatase (272 aa).

The active-site Nucleophile is Asp-8. Mg(2+) contacts are provided by Asp-8, Asp-10, and Asp-212.

This sequence belongs to the HAD-like hydrolase superfamily. Cof family. Mg(2+) is required as a cofactor.

It catalyses the reaction 4-amino-2-methyl-5-(diphosphooxymethyl)pyrimidine + H2O = 4-amino-2-methyl-5-(phosphooxymethyl)pyrimidine + phosphate + H(+). In terms of biological role, catalyzes the hydrolysis of 4-amino-2-methyl-5-hydroxymethylpyrimidine pyrophosphate (HMP-PP) to 4-amino-2-methyl-5-hydroxymethylpyrimidine phosphate (HMP-P). In Cronobacter sakazakii (strain ATCC BAA-894) (Enterobacter sakazakii), this protein is HMP-PP phosphatase.